A 256-amino-acid polypeptide reads, in one-letter code: Ubiquinone biosynthesis O-methyltransferase (256 aa).

Arginine 44, glycine 80, aspartate 101, and methionine 144 together coordinate S-adenosyl-L-methionine.

It belongs to the methyltransferase superfamily. UbiG/COQ3 family.

It carries out the reaction a 3-demethylubiquinol + S-adenosyl-L-methionine = a ubiquinol + S-adenosyl-L-homocysteine + H(+). It catalyses the reaction a 3-(all-trans-polyprenyl)benzene-1,2-diol + S-adenosyl-L-methionine = a 2-methoxy-6-(all-trans-polyprenyl)phenol + S-adenosyl-L-homocysteine + H(+). The protein operates within cofactor biosynthesis; ubiquinone biosynthesis. Functionally, O-methyltransferase that catalyzes the 2 O-methylation steps in the ubiquinone biosynthetic pathway. The protein is Ubiquinone biosynthesis O-methyltransferase of Methylocella silvestris (strain DSM 15510 / CIP 108128 / LMG 27833 / NCIMB 13906 / BL2).